Reading from the N-terminus, the 396-residue chain is Stearoyl-[acyl-carrier-protein] 9-desaturase, chloroplastic (396 aa).

Residues 1 to 33 (MAIRINTATFQSDLYRSFAFPQPKPLRSPKFAM) constitute a chloroplast transit peptide. Fe cation-binding residues include E138, E176, H179, E229, E262, and H265.

This sequence belongs to the fatty acid desaturase type 2 family. Homodimer. Fe(2+) serves as cofactor.

It localises to the plastid. The protein localises to the chloroplast. The enzyme catalyses octadecanoyl-[ACP] + 2 reduced [2Fe-2S]-[ferredoxin] + O2 + 2 H(+) = (9Z)-octadecenoyl-[ACP] + 2 oxidized [2Fe-2S]-[ferredoxin] + 2 H2O. It participates in lipid metabolism; fatty acid metabolism. Functionally, converts stearoyl-ACP to oleoyl-ACP by introduction of a cis double bond between carbons 9 and 10 of the acyl chain. The sequence is that of Stearoyl-[acyl-carrier-protein] 9-desaturase, chloroplastic from Helianthus annuus (Common sunflower).